Here is a 225-residue protein sequence, read N- to C-terminus: DNA-binding response regulator MtrA (225 aa).

The Response regulatory domain maps to R4–L117. D53 is modified (4-aspartylphosphate). Residues A125–P224 constitute a DNA-binding region (ompR/PhoB-type).

Post-translationally, phosphorylated by MtrB.

Functionally, member of the two-component regulatory system MtrA/MtrB. The polypeptide is DNA-binding response regulator MtrA (mtrA) (Mycolicibacterium paratuberculosis (strain ATCC BAA-968 / K-10) (Mycobacterium paratuberculosis)).